The following is a 323-amino-acid chain: uncharacterized protein (323 aa).

Transmembrane regions (helical) follow at residues 8-28, 32-52, and 92-112; these read FLVIILVFLAVILTELIMFME, LTLLKCFIFVDLLLVFIPFSL, and ITIFWVYTIWNGLNSIFCGIF.

The protein localises to the mitochondrion membrane. This is an uncharacterized protein from Neurospora crassa (strain ATCC 24698 / 74-OR23-1A / CBS 708.71 / DSM 1257 / FGSC 987).